We begin with the raw amino-acid sequence, 143 residues long: Small ribosomal subunit protein eS12 (143 aa).

Glycyl lysine isopeptide (Lys-Gly) (interchain with G-Cter in ubiquitin) cross-links involve residues lysine 85, lysine 95, and lysine 114.

This sequence belongs to the eukaryotic ribosomal protein eS12 family. In terms of assembly, component of the small ribosomal subunit (SSU). Mature yeast ribosomes consist of a small (40S) and a large (60S) subunit. The 40S small subunit contains 1 molecule of ribosomal RNA (18S rRNA) and 33 different proteins (encoded by 57 genes). The large 60S subunit contains 3 rRNA molecules (25S, 5.8S and 5S rRNA) and 46 different proteins (encoded by 81 genes).

It is found in the cytoplasm. Component of the ribosome, a large ribonucleoprotein complex responsible for the synthesis of proteins in the cell. The small ribosomal subunit (SSU) binds messenger RNAs (mRNAs) and translates the encoded message by selecting cognate aminoacyl-transfer RNA (tRNA) molecules. The large subunit (LSU) contains the ribosomal catalytic site termed the peptidyl transferase center (PTC), which catalyzes the formation of peptide bonds, thereby polymerizing the amino acids delivered by tRNAs into a polypeptide chain. The nascent polypeptides leave the ribosome through a tunnel in the LSU and interact with protein factors that function in enzymatic processing, targeting, and the membrane insertion of nascent chains at the exit of the ribosomal tunnel. The polypeptide is Small ribosomal subunit protein eS12 (Saccharomyces cerevisiae (strain ATCC 204508 / S288c) (Baker's yeast)).